We begin with the raw amino-acid sequence, 203 residues long: RNA chaperone ProQ (203 aa).

The disordered stretch occupies residues 111 to 138 (KAKRQALAPKKPAKKVAPKRAPAVKKER).

This sequence belongs to the ProQ family.

The protein resides in the cytoplasm. Its function is as follows. RNA chaperone with significant RNA binding, RNA strand exchange and RNA duplexing activities. The chain is RNA chaperone ProQ from Shewanella frigidimarina (strain NCIMB 400).